Here is a 428-residue protein sequence, read N- to C-terminus: Histidine--tRNA ligase (428 aa).

The protein belongs to the class-II aminoacyl-tRNA synthetase family. As to quaternary structure, homodimer.

Its subcellular location is the cytoplasm. The catalysed reaction is tRNA(His) + L-histidine + ATP = L-histidyl-tRNA(His) + AMP + diphosphate + H(+). The sequence is that of Histidine--tRNA ligase from Lactobacillus delbrueckii subsp. bulgaricus (strain ATCC BAA-365 / Lb-18).